The primary structure comprises 79 residues: Acyl carrier protein (79 aa).

One can recognise a Carrier domain in the interval 2 to 77 (STIEERVKKI…QAIDYVKAHV (76 aa)). At serine 37 the chain carries O-(pantetheine 4'-phosphoryl)serine.

Belongs to the acyl carrier protein (ACP) family. 4'-phosphopantetheine is transferred from CoA to a specific serine of apo-ACP by AcpS. This modification is essential for activity because fatty acids are bound in thioester linkage to the sulfhydryl of the prosthetic group.

The protein localises to the cytoplasm. It functions in the pathway lipid metabolism; fatty acid biosynthesis. In terms of biological role, carrier of the growing fatty acid chain in fatty acid biosynthesis. In Xanthomonas axonopodis pv. citri (strain 306), this protein is Acyl carrier protein.